Consider the following 197-residue polypeptide: Small ribosomal subunit protein uS4c (197 aa).

Residues 85 to 157 (MRLDNILFRL…LQLFTGKELA (73 aa)) form the S4 RNA-binding domain.

It belongs to the universal ribosomal protein uS4 family. Part of the 30S ribosomal subunit. Contacts protein S5. The interaction surface between S4 and S5 is involved in control of translational fidelity.

Its subcellular location is the plastid. Functionally, one of the primary rRNA binding proteins, it binds directly to 16S rRNA where it nucleates assembly of the body of the 30S subunit. In terms of biological role, with S5 and S12 plays an important role in translational accuracy. The protein is Small ribosomal subunit protein uS4c (rps4) of Cuscuta gronovii (Common dodder).